A 192-amino-acid chain; its full sequence is Probable apo-citrate lyase phosphoribosyl-dephospho-CoA transferase (192 aa).

The protein belongs to the CitX family.

The catalysed reaction is apo-[citrate lyase ACP] + 2'-(5''-triphospho-alpha-D-ribosyl)-3'-dephospho-CoA = holo-[citrate lyase ACP] + diphosphate. Transfers 2-(5''-triphosphoribosyl)-3'-dephosphocoenzyme-A on a serine residue to the apo-acyl carrier protein (gamma chain) of the citrate lyase to yield holo-acyl carrier protein. This chain is Probable apo-citrate lyase phosphoribosyl-dephospho-CoA transferase, found in Streptococcus pyogenes serotype M6 (strain ATCC BAA-946 / MGAS10394).